We begin with the raw amino-acid sequence, 245 residues long: MDKNELVQKAKLAEQAERYDDMAACMKSVTEQGAELSNEERNLLSVAYKNVVGARRSSWRVVSSIEQKTEGAEKKQQMAREYREKIETELRDICNDVLSLLEKFLIPNASQPESKVFYLKMKGDYYRYLAEVAAGDDKKGIVDQSQQAYQEAFEISKKEMQPTHPIRLGLALNFSVFYYEILNSPEKACSLAKTAFDEAIAELDTLSEESYKDSTLIMQLLRDNLTLWTSDTQGDEAEAGEGGEN.

At Met1 the chain carries N-acetylmethionine. Lys3 bears the N6-acetyllysine mark. A Phosphoserine; by PKA modification is found at Ser58. Lys68 is subject to N6-acetyllysine. Phosphoserine occurs at positions 184, 207, and 210. A Phosphothreonine; by CK1 modification is found at Thr232.

This sequence belongs to the 14-3-3 family. In terms of assembly, homodimer. Heterodimerizes with YWHAE. Homo- and heterodimerization is inhibited by phosphorylation on Ser-58. Interacts with FOXO4, NOXA1, SSH1 and ARHGEF2. Interacts with CDK16 and with WEE1 (C-terminal). Interacts with MLF1 (phosphorylated form); the interaction retains it in the cytoplasm. Interacts with BSPRY. Interacts with Thr-phosphorylated ITGB2. Interacts with Pseudomonas aeruginosa exoS (unphosphorylated form). Interacts with BAX; the interaction occurs in the cytoplasm. Under stress conditions, MAPK8-mediated phosphorylation releases BAX to mitochondria. Interacts with phosphorylated RAF1; the interaction is inhibited when YWHAZ is phosphorylated on Thr-232. Interacts with TP53; the interaction enhances p53 transcriptional activity. The Ser-58 phosphorylated form inhibits this interaction and p53 transcriptional activity. Interacts with ABL1 (phosphorylated form); the interaction retains ABL1 in the cytoplasm. Interacts with PKA-phosphorylated AANAT; the interaction modulates AANAT enzymatic activity by increasing affinity for arylalkylamines and acetyl-CoA and protecting the enzyme from dephosphorylation and proteasomal degradation. It may also prevent thiol-dependent inactivation. Interacts with AKT1; the interaction phosphorylates YWHAZ and modulates dimerization. Interacts with GAB2. Interacts with SAMSN1. Interacts with BCL2L11 and TLK2. Interacts with the 'Thr-369' phosphorylated form of DAPK2. Interacts with PI4KB, TBC1D22A and TBC1D22B. Interacts with ZFP36L1 (via phosphorylated form); this interaction occurs in a p38 MAPK- and AKT-signaling pathways. Interacts with SLITRK1. Interacts with AK5, LDB1, MADD, PDE1A and SMARCB1. Interacts with ARHGEF7 and GIT1. Interacts with MEFV. Interacts with ADAM22 (via C-terminus). In terms of processing, the delta, brain-specific form differs from the zeta form in being phosphorylated. Phosphorylation on Ser-184 by MAPK8; promotes dissociation of BAX and translocation of BAX to mitochondria. Phosphorylation on Thr-232; inhibits binding of RAF1. Phosphorylated on Ser-58 by PKA and protein kinase C delta type catalytic subunit in a sphingosine-dependent fashion. Phosphorylation on Ser-58 by PKA; disrupts homodimerization and heterodimerization with YHAE and TP53.

It is found in the cytoplasm. Its subcellular location is the melanosome. In terms of biological role, adapter protein implicated in the regulation of a large spectrum of both general and specialized signaling pathways. Binds to a large number of partners, usually by recognition of a phosphoserine or phosphothreonine motif. Binding generally results in the modulation of the activity of the binding partner. Promotes cytosolic retention and inactivation of TFEB transcription factor by binding to phosphorylated TFEB. Induces ARHGEF7 activity on RAC1 as well as lamellipodia and membrane ruffle formation. In neurons, regulates spine maturation through the modulation of ARHGEF7 activity. The polypeptide is 14-3-3 protein zeta/delta (Ywhaz) (Mus musculus (Mouse)).